A 65-amino-acid chain; its full sequence is Large ribosomal subunit protein bL35 (65 aa).

It belongs to the bacterial ribosomal protein bL35 family.

The protein is Large ribosomal subunit protein bL35 of Psychrobacter sp. (strain PRwf-1).